A 390-amino-acid polypeptide reads, in one-letter code: Transcription factor bHLH76 (390 aa).

Residues N147 to K217 are disordered. Residues N207–K217 show a composition bias toward basic and acidic residues. The 51-residue stretch at Q229–L279 folds into the bHLH domain.

In terms of assembly, homodimer. Interacts with IBH1. Binds reversibly to CRY2 after blue light illumination. Expressed constitutively in roots, leaves, stems, and flowers.

It localises to the nucleus. In terms of biological role, transcriptional activator involved in cell elongation. Regulates the expression of a subset of genes involved in cell expansion by binding to the G-box motif. Binds to chromatin DNA of the FT gene and promotes its expression, and thus triggers flowering in response to blue light. The chain is Transcription factor bHLH76 (BHLH76) from Arabidopsis thaliana (Mouse-ear cress).